We begin with the raw amino-acid sequence, 319 residues long: NADH-quinone oxidoreductase subunit H 1 (319 aa).

8 helical membrane-spanning segments follow: residues methionine 1–valine 21, phenylalanine 74–isoleucine 94, valine 107–alanine 127, leucine 147–leucine 167, valine 179–alanine 199, valine 238–leucine 258, isoleucine 262–leucine 282, and phenylalanine 293–valine 313.

Belongs to the complex I subunit 1 family. In terms of assembly, NDH-1 is composed of 14 different subunits. Subunits NuoA, H, J, K, L, M, N constitute the membrane sector of the complex.

The protein resides in the cell inner membrane. It catalyses the reaction a quinone + NADH + 5 H(+)(in) = a quinol + NAD(+) + 4 H(+)(out). Its function is as follows. NDH-1 shuttles electrons from NADH, via FMN and iron-sulfur (Fe-S) centers, to quinones in the respiratory chain. The immediate electron acceptor for the enzyme in this species is believed to be ubiquinone. Couples the redox reaction to proton translocation (for every two electrons transferred, four hydrogen ions are translocated across the cytoplasmic membrane), and thus conserves the redox energy in a proton gradient. This subunit may bind ubiquinone. The polypeptide is NADH-quinone oxidoreductase subunit H 1 (Rhodopseudomonas palustris (strain BisB5)).